We begin with the raw amino-acid sequence, 479 residues long: Aspartyl/glutamyl-tRNA(Asn/Gln) amidotransferase subunit B (479 aa).

The protein belongs to the GatB/GatE family. GatB subfamily. Heterotrimer of A, B and C subunits.

It catalyses the reaction L-glutamyl-tRNA(Gln) + L-glutamine + ATP + H2O = L-glutaminyl-tRNA(Gln) + L-glutamate + ADP + phosphate + H(+). It carries out the reaction L-aspartyl-tRNA(Asn) + L-glutamine + ATP + H2O = L-asparaginyl-tRNA(Asn) + L-glutamate + ADP + phosphate + 2 H(+). Its function is as follows. Allows the formation of correctly charged Asn-tRNA(Asn) or Gln-tRNA(Gln) through the transamidation of misacylated Asp-tRNA(Asn) or Glu-tRNA(Gln) in organisms which lack either or both of asparaginyl-tRNA or glutaminyl-tRNA synthetases. The reaction takes place in the presence of glutamine and ATP through an activated phospho-Asp-tRNA(Asn) or phospho-Glu-tRNA(Gln). This Streptococcus pyogenes serotype M28 (strain MGAS6180) protein is Aspartyl/glutamyl-tRNA(Asn/Gln) amidotransferase subunit B.